Consider the following 321-residue polypeptide: Large ribosomal RNA subunit accumulation protein YCED homolog 1, chloroplastic (321 aa).

A chloroplast-targeting transit peptide spans 1–32 (MSLVCSLSCVAPLPQTKQSRPSFLKLETCTLS).

The protein belongs to the DUF177 domain family.

The protein localises to the plastid. It is found in the chloroplast stroma. Its subcellular location is the chloroplast nucleoid. Its function is as follows. Plays a role in synthesis, processing and/or stability of 23S rRNA. Required for embryogenesis. The polypeptide is Large ribosomal RNA subunit accumulation protein YCED homolog 1, chloroplastic (Arabidopsis thaliana (Mouse-ear cress)).